The following is a 238-amino-acid chain: Ankyrin repeat domain-containing protein 49 (238 aa).

Ser48 bears the Phosphoserine mark. ANK repeat units follow at residues 77-105 (LLWA…TRDE), 106-135 (DKYT…DVHA), 139-168 (DGWT…DVNA), and 172-205 (GLLT…GLKN).

The protein resides in the nucleus. Functionally, may have a role in spermatogenesis where it promotes autophagy in response to serum starvation, via the NF-kappaB pathway. The polypeptide is Ankyrin repeat domain-containing protein 49 (ANKRD49) (Bos taurus (Bovine)).